Consider the following 394-residue polypeptide: Elongation factor Tu (394 aa).

The region spanning 10 to 204 (KPHVNIGTIG…AVDSYIPQPV (195 aa)) is the tr-type G domain. Positions 19–26 (GHVDHGKT) are G1. 19-26 (GHVDHGKT) serves as a coordination point for GTP. T26 contacts Mg(2+). The tract at residues 60–64 (GITIS) is G2. Positions 81-84 (DCPG) are G3. GTP contacts are provided by residues 81-85 (DCPGH) and 136-139 (NKVD). A G4 region spans residues 136–139 (NKVD). The interval 174–176 (SAL) is G5.

This sequence belongs to the TRAFAC class translation factor GTPase superfamily. Classic translation factor GTPase family. EF-Tu/EF-1A subfamily. As to quaternary structure, monomer.

The protein resides in the cytoplasm. The enzyme catalyses GTP + H2O = GDP + phosphate + H(+). GTP hydrolase that promotes the GTP-dependent binding of aminoacyl-tRNA to the A-site of ribosomes during protein biosynthesis. This Rickettsia canadensis (strain McKiel) protein is Elongation factor Tu.